Consider the following 238-residue polypeptide: 7-cyano-7-deazaguanine synthase (238 aa).

14 to 24 provides a ligand contact to ATP; sequence FSGGQDSATCL. C202, C217, C220, and C223 together coordinate Zn(2+).

This sequence belongs to the QueC family. Zn(2+) is required as a cofactor.

It catalyses the reaction 7-carboxy-7-deazaguanine + NH4(+) + ATP = 7-cyano-7-deazaguanine + ADP + phosphate + H2O + H(+). The protein operates within purine metabolism; 7-cyano-7-deazaguanine biosynthesis. In terms of biological role, catalyzes the ATP-dependent conversion of 7-carboxy-7-deazaguanine (CDG) to 7-cyano-7-deazaguanine (preQ(0)). The polypeptide is 7-cyano-7-deazaguanine synthase (Nitrobacter hamburgensis (strain DSM 10229 / NCIMB 13809 / X14)).